The chain runs to 456 residues: MHRYKEEASSLIKLATPVLIASVAQTGMGFVDTVMAGGVSATDMAAVSVASSIWLPSILFGIGLLMALVPVVAQLNGSARREKIPFEIQQGVVLALLISIPIIGVLLQTQFILQLMDVEAVMAGKTVGYIHAVIFAVPAFLLFQTLRSFTDGMSLTKPAMVIGFIGLLLNIPLNWIFVYGKFGAPELGGVGCGVATTIVYWVMFALLLAYVMTSSRLKSINVFGEYHKPQWKAQVRLFKLGFPVAAALFFEVTLFAVVALLVSPLGPIIVAAHQVAINFSSLVFMLPMSVGAAVSIRVGHRLGEENVDGARVASRVGIMVGLALATITAIITVLSRELIAELYTNNPEVISLAMQLLLFAAVYQCTDAVQVIAAGALRGYKDMRAIFNRTFIAYWILGLPTGYILGRTDWIVEPMGAQGFWLGFIIGLTAAALMLGVRLRWMHRQEPDVQLNFSLQ.

The next 12 membrane-spanning stretches (helical) occupy residues 11-31 (LIKLATPVLIASVAQTGMGFV), 53-73 (IWLPSILFGIGLLMALVPVVA), 92-112 (VVLALLISIPIIGVLLQTQFI), 126-146 (TVGYIHAVIFAVPAFLLFQTL), 159-179 (AMVIGFIGLLLNIPLNWIFVY), 189-209 (GVGCGVATTIVYWVMFALLLA), 242-262 (FPVAAALFFEVTLFAVVALLV), 268-288 (IIVAAHQVAINFSSLVFMLPM), 314-334 (SRVGIMVGLALATITAIITVL), 356-376 (LLLFAAVYQCTDAVQVIAAGA), 385-405 (AIFNRTFIAYWILGLPTGYIL), and 417-437 (AQGFWLGFIIGLTAAALMLGV).

This sequence belongs to the multi antimicrobial extrusion (MATE) (TC 2.A.66.1) family.

The protein resides in the cell inner membrane. In terms of biological role, multidrug efflux pump that functions as a Na(+)/drug antiporter. Confers resistance to several drugs, such as norfloxacin, ciprofloxacin, ethidium, kanamycin and streptomycin. The protein is Multidrug resistance protein NorM (norM) of Vibrio parahaemolyticus serotype O3:K6 (strain RIMD 2210633).